Here is a 377-residue protein sequence, read N- to C-terminus: Erythronate-4-phosphate dehydrogenase (377 aa).

Substrate is bound by residues Ser-45 and Thr-67. Residues 127-128 (QV), Asp-147, and Thr-176 each bind NAD(+). Arg-209 is a catalytic residue. NAD(+) is bound at residue Asp-233. Glu-238 is an active-site residue. Residue His-255 is the Proton donor of the active site. Gly-258 is an NAD(+) binding site. Tyr-259 provides a ligand contact to substrate.

Belongs to the D-isomer specific 2-hydroxyacid dehydrogenase family. PdxB subfamily. In terms of assembly, homodimer.

The protein resides in the cytoplasm. The catalysed reaction is 4-phospho-D-erythronate + NAD(+) = (R)-3-hydroxy-2-oxo-4-phosphooxybutanoate + NADH + H(+). Its pathway is cofactor biosynthesis; pyridoxine 5'-phosphate biosynthesis; pyridoxine 5'-phosphate from D-erythrose 4-phosphate: step 2/5. Its function is as follows. Catalyzes the oxidation of erythronate-4-phosphate to 3-hydroxy-2-oxo-4-phosphonooxybutanoate. In Vibrio atlanticus (strain LGP32) (Vibrio splendidus (strain Mel32)), this protein is Erythronate-4-phosphate dehydrogenase.